We begin with the raw amino-acid sequence, 248 residues long: Probable transcriptional regulatory protein trd_1132 (248 aa).

The protein belongs to the TACO1 family.

It localises to the cytoplasm. In Thermomicrobium roseum (strain ATCC 27502 / DSM 5159 / P-2), this protein is Probable transcriptional regulatory protein trd_1132.